The chain runs to 94 residues: Co-chaperonin GroES (94 aa).

This sequence belongs to the GroES chaperonin family. As to quaternary structure, heptamer of 7 subunits arranged in a ring. Interacts with the chaperonin GroEL.

Its subcellular location is the cytoplasm. In terms of biological role, together with the chaperonin GroEL, plays an essential role in assisting protein folding. The GroEL-GroES system forms a nano-cage that allows encapsulation of the non-native substrate proteins and provides a physical environment optimized to promote and accelerate protein folding. GroES binds to the apical surface of the GroEL ring, thereby capping the opening of the GroEL channel. This is Co-chaperonin GroES from Limosilactobacillus reuteri (strain DSM 20016) (Lactobacillus reuteri).